Reading from the N-terminus, the 393-residue chain is NADH-quinone oxidoreductase subunit D (393 aa).

Belongs to the complex I 49 kDa subunit family. In terms of assembly, NDH-1 is composed of 14 different subunits. Subunits NuoB, C, D, E, F, and G constitute the peripheral sector of the complex.

The protein localises to the cell inner membrane. The enzyme catalyses a quinone + NADH + 5 H(+)(in) = a quinol + NAD(+) + 4 H(+)(out). Its function is as follows. NDH-1 shuttles electrons from NADH, via FMN and iron-sulfur (Fe-S) centers, to quinones in the respiratory chain. The immediate electron acceptor for the enzyme in this species is believed to be ubiquinone. Couples the redox reaction to proton translocation (for every two electrons transferred, four hydrogen ions are translocated across the cytoplasmic membrane), and thus conserves the redox energy in a proton gradient. This Ehrlichia chaffeensis (strain ATCC CRL-10679 / Arkansas) protein is NADH-quinone oxidoreductase subunit D.